The following is a 2824-amino-acid chain: Highly reducing polyketide synthase stpks1 (2824 aa).

One can recognise a Ketosynthase family 3 (KS3) domain in the interval 8–428 (PKPVAVVGIS…GANGHVIAES (421 aa)). Catalysis depends on for beta-ketoacyl synthase activity residues Cys177, His312, and His348. The tract at residues 517-854 (QLVFVFSGQG…LTAVGNLSTL (338 aa)) is malonyl-CoA:ACP transacylase (MAT) domain. Ser616 serves as the catalytic For malonyltransferase activity. Positions 886 to 1004 (MPFYSESSEL…GFMTTEVMDK (119 aa)) are N-terminal hotdog fold. Residues 886 to 1168 (MPFYSESSEL…SKHWTGAVPT (283 aa)) form the PKS/mFAS DH domain. Residues 894–1083 (ELAVKMKRSR…PSLLDSCIHG (190 aa)) form a dehydratase (DH) domain region. His925 functions as the Proton acceptor; for dehydratase activity in the catalytic mechanism. The interval 1018-1168 (TTPADISNLY…SKHWTGAVPT (151 aa)) is C-terminal hotdog fold. Asp1078 serves as the catalytic Proton donor; for dehydratase activity. The interval 1101 to 1449 (PSHIGRVTLY…KFQVVDGAQD (349 aa)) is methyltransferase (CMet) domain. Positions 1213-1232 (APPSANGHANGHANGSANGS) are disordered. Residues 1518-1840 (TGTFDGAVAT…LPSDFSVSQS (323 aa)) form an enoyl reductase (ER) domain region. Positions 1842–2096 (ALADDKTYLV…SESVLYNHLV (255 aa)) are ketoreductase (KR) domain. Residues 2109 to 2196 (DPYEVLQEIV…TAVSTAEKPF (88 aa)) enclose the Carrier domain. The interval 2200–2414 (AMHQPGQTIL…WASSDATTRM (215 aa)) is thioesterase (TE) domain. The segment at 2608 to 2809 (YRQNKVFTSM…ATGYSNVQVC (202 aa)) is methyltransferase (CMet) domain.

The protein operates within mycotoxin biosynthesis. In terms of biological role, highly reducing polyketide synthase; part of the gene cluster that mediates the biosynthesis of strobilurin A, an antifungal polyketide that contains a key beta-methoxyacrylate toxophore that targets the complex III of the mitochondrial electron transport chain. Strobilurin biosynthesis begins with construction of benzoyl CoA by step-wise elimination of ammonia from phenylalanine by the phenylalanine ammonia-lyase str11, oxygenation by str8 and retro-Claisen reaction to form benzoic acid, which is activated to its CoA thiolester benzoyl CoA by the dedicated CoA ligase str10. Benzoyl CoA forms the starter unit for the highly reducing polyketide synthase stpks1 that produces the polyketide prestrobilutin A. The FAD-dependent oxygenase str9 then catalyzes the key oxidative rearrangement responsible for the creation of the beta-methoxyacrylate toxophore. Str9 performs epoxidation of the 2,3 olefin of prestrobilutin A, followed by Meinwald rearrangement to furnish the aldehyde intermediate. Rapid enolization of the aldehyde intermediate would give the beta-methoxyacrylate skeleton and methylations catalyzed by str2 and str3 complete the synthesis and lead to the production of strobilurin A. The short-chain dehydrogenase stl2 and the dehydrogenase str4 play a role in the shunt pathway leading to the production of bolineol. The cluster encodes no obvious halogenase gene that could be involved in production of strobilurin B, nor any obvious dimethylallyl-transferase that could be involved in the production of strobilurin G. It is possible that unknown proteins encoded in, or near, the cluster (such as str1 or stl1) may form new classes of halogenases or dimethylally-transferases, or that the responsible genes are located elsewhere on the genome. Similarly, proteins encoded by str5/str6 hydrolases appear to have no chemical role in the biosynthesis of strobilurin A. Finally, no obvious self-resistance gene is found within the cluster. The polypeptide is Highly reducing polyketide synthase stpks1 (Strobilurus tenacellus).